A 231-amino-acid polypeptide reads, in one-letter code: Thiamine import ATP-binding protein ThiQ (231 aa).

The 229-residue stretch at 2-230 (LHLDRLLIRQ…PPPALRAYLG (229 aa)) folds into the ABC transporter domain. 32–39 (GPSGGGKS) is an ATP binding site.

It belongs to the ABC transporter superfamily. Thiamine importer (TC 3.A.1.19.1) family. As to quaternary structure, the complex is composed of two ATP-binding proteins (ThiQ), two transmembrane proteins (ThiP) and a solute-binding protein (ThiB).

Its subcellular location is the cell inner membrane. It carries out the reaction thiamine(out) + ATP + H2O = thiamine(in) + ADP + phosphate + H(+). Its function is as follows. Part of the ABC transporter complex ThiBPQ involved in thiamine import. Responsible for energy coupling to the transport system. This is Thiamine import ATP-binding protein ThiQ from Cereibacter sphaeroides (strain ATCC 17023 / DSM 158 / JCM 6121 / CCUG 31486 / LMG 2827 / NBRC 12203 / NCIMB 8253 / ATH 2.4.1.) (Rhodobacter sphaeroides).